A 999-amino-acid chain; its full sequence is Golgin subfamily A member 2 (999 aa).

Residues 1-11 (MWPPRFPPPRP) show a composition bias toward pro residues. Disordered regions lie at residues 1 to 80 (MWPP…PAPP) and 244 to 288 (ARQK…YNKD). Residues 1–86 (MWPPRFPPPR…PAPPTAATDT (86 aa)) are interaction with p115/USO1. Residues Arg18 and Arg30 each carry the dimethylated arginine modification. The short motif at 26–49 (KKKLREYQQKNSPGVPAGAKKKKK) is the Nuclear localization signal element. Phosphoserine is present on residues Ser37, Ser66, Ser273, and Ser438. Positions 147–895 (LTSSNMKELE…VLRLVNERNE (749 aa)) form a coiled coil. The span at 271–280 (TLSTVSTQQK) shows a compositional bias: polar residues. The segment at 444–468 (SQMEEPPPPEPPAGPSEAEEQLQGE) is disordered. The span at 448 to 457 (EPPPPEPPAG) shows a compositional bias: pro residues. Ser697, Ser934, and Ser978 each carry phosphoserine. The tract at residues 989-999 (DENDEVKIMVV) is interaction with GORASP1/GRASP65.

This sequence belongs to the GOLGA2 family. In terms of assembly, homodimer, may assemble into homohexamers. Homotetramer; forms a parallel homotetramer with a flexible rod-like structure that can give rise to I- and Y-shaped conformations. Interacts with GORASP1/GRASP65. The homooligomer forms a complex with GORASP1 with a 1:1 stoichiometry. Interacts with RAB1B that has been activated by GTP-binding. Interacts with p115/USO1; interaction with p115/USO1 inhibits interaction with STX5 and/or RAB1B. Interacts with STX5. Interacts with ZFPL1. Interacts with AKAP450/AKAP9; leading to recruit AKAP450/AKAP9 to the cis-Golgi. In terms of processing, phosphorylated at Ser-37 by CDK1 at the onset of mitosis, inhibiting the interaction with p115/USO1 and triggering Golgi disassembly. A report however suggests that Golgi disassembly is independent of phosphorylation at Ser-37. Phosphorylated at Ser-37 in prophase as the Golgi complex starts to break down, and remains phosphorylated during further breakdown and partitioning of the Golgi fragments in metaphase and anaphase. In telophase, GM130 is dephosphorylated by PP2A as the Golgi fragments start to reassemble. Post-translationally, cleaved by caspases at the onset of apoptosis. Methylation by PRMT5 is required for Golgi ribbon formation. Widely expressed. Detected in brain, kidney, lung, liver, spleen, heart, skeletal muscle, thymus and pancreas. Detected in spermatocytes. Present in oocytes during all oocyte meiotic maturation (at protein level).

Its subcellular location is the golgi apparatus. It is found in the cis-Golgi network membrane. It localises to the endoplasmic reticulum-Golgi intermediate compartment membrane. The protein resides in the cytoplasm. The protein localises to the cytoskeleton. Its subcellular location is the spindle pole. Peripheral membrane component of the cis-Golgi stack that acts as a membrane skeleton that maintains the structure of the Golgi apparatus, and as a vesicle thether that facilitates vesicle fusion to the Golgi membrane. Required for normal protein transport from the endoplasmic reticulum to the Golgi apparatus and the cell membrane. Together with p115/USO1 and STX5, involved in vesicle tethering and fusion at the cis-Golgi membrane to maintain the stacked and inter-connected structure of the Golgi apparatus. Plays a central role in mitotic Golgi disassembly: phosphorylation at Ser-37 by CDK1 at the onset of mitosis inhibits the interaction with p115/USO1, preventing tethering of COPI vesicles and thereby inhibiting transport through the Golgi apparatus during mitosis. Also plays a key role in spindle pole assembly and centrosome organization. Promotes the mitotic spindle pole assembly by activating the spindle assembly factor TPX2 to nucleate microtubules around the Golgi and capture them to couple mitotic membranes to the spindle: upon phosphorylation at the onset of mitosis, GOLGA2 interacts with importin-alpha via the nuclear localization signal region, leading to recruit importin-alpha to the Golgi membranes and liberate the spindle assembly factor TPX2 from importin-alpha. TPX2 then activates AURKA kinase and stimulates local microtubule nucleation. Upon filament assembly, nascent microtubules are further captured by GOLGA2, thus linking Golgi membranes to the spindle. Regulates the meiotic spindle pole assembly, probably via the same mechanism. Also regulates the centrosome organization. Also required for the Golgi ribbon formation and glycosylation of membrane and secretory proteins. The chain is Golgin subfamily A member 2 (Golga2) from Mus musculus (Mouse).